Reading from the N-terminus, the 208-residue chain is Uracil phosphoribosyltransferase (208 aa).

5-phospho-alpha-D-ribose 1-diphosphate contacts are provided by residues Arg-78, Arg-103, and 130-138 (DPMLATGGS). Residues Ile-193 and 198-200 (GDA) each bind uracil. Residue Asp-199 coordinates 5-phospho-alpha-D-ribose 1-diphosphate.

The protein belongs to the UPRTase family. Mg(2+) is required as a cofactor.

The catalysed reaction is UMP + diphosphate = 5-phospho-alpha-D-ribose 1-diphosphate + uracil. It participates in pyrimidine metabolism; UMP biosynthesis via salvage pathway; UMP from uracil: step 1/1. Allosterically activated by GTP. Catalyzes the conversion of uracil and 5-phospho-alpha-D-ribose 1-diphosphate (PRPP) to UMP and diphosphate. The protein is Uracil phosphoribosyltransferase of Shewanella amazonensis (strain ATCC BAA-1098 / SB2B).